Here is a 296-residue protein sequence, read N- to C-terminus: Homoserine kinase (296 aa).

Residue 85–95 coordinates ATP; that stretch reads PVARGLGSSAA.

Belongs to the GHMP kinase family. Homoserine kinase subfamily.

The protein resides in the cytoplasm. The catalysed reaction is L-homoserine + ATP = O-phospho-L-homoserine + ADP + H(+). Its pathway is amino-acid biosynthesis; L-threonine biosynthesis; L-threonine from L-aspartate: step 4/5. In terms of biological role, catalyzes the ATP-dependent phosphorylation of L-homoserine to L-homoserine phosphate. This is Homoserine kinase from Moorella thermoacetica (strain ATCC 39073 / JCM 9320).